Consider the following 108-residue polypeptide: UPF0060 membrane protein YnfA (108 aa).

The Periplasmic portion of the chain corresponds to Met-1–Thr-5. A helical transmembrane segment spans residues Leu-6–Leu-26. Over Lys-27–Ala-30 the chain is Cytoplasmic. Residues Ser-31 to Leu-51 form a helical membrane-spanning segment. The Periplasmic portion of the chain corresponds to His-52–Tyr-60. A helical membrane pass occupies residues Ala-61–Val-81. Residues Lys-82 to Ser-84 lie on the Cytoplasmic side of the membrane. The chain crosses the membrane as a helical span at residues Leu-85 to Trp-105. The Periplasmic portion of the chain corresponds to Gly-106–Thr-108.

This sequence belongs to the UPF0060 family.

It is found in the cell inner membrane. In Shigella flexneri serotype 5b (strain 8401), this protein is UPF0060 membrane protein YnfA.